The chain runs to 87 residues: Small ribosomal subunit protein bS20 (87 aa).

The protein belongs to the bacterial ribosomal protein bS20 family.

Functionally, binds directly to 16S ribosomal RNA. The polypeptide is Small ribosomal subunit protein bS20 (Brachyspira hyodysenteriae (strain ATCC 49526 / WA1)).